We begin with the raw amino-acid sequence, 457 residues long: NADH-quinone oxidoreductase subunit N (457 aa).

The next 14 helical transmembrane spans lie at Asn-2–Leu-22, Leu-25–Phe-45, Asn-60–Phe-80, Gly-92–Ser-112, Met-114–Ser-134, Phe-149–Ala-169, Phe-188–Phe-208, Phe-222–Met-242, Tyr-253–Ala-273, Leu-283–Ile-303, Phe-310–Val-330, Ala-353–Phe-373, Val-382–Val-402, and Val-431–Leu-451.

It belongs to the complex I subunit 2 family. In terms of assembly, NDH-1 is composed of 14 different subunits. Subunits NuoA, H, J, K, L, M, N constitute the membrane sector of the complex.

It localises to the cell inner membrane. It catalyses the reaction a quinone + NADH + 5 H(+)(in) = a quinol + NAD(+) + 4 H(+)(out). Functionally, NDH-1 shuttles electrons from NADH, via FMN and iron-sulfur (Fe-S) centers, to quinones in the respiratory chain. The immediate electron acceptor for the enzyme in this species is believed to be a menaquinone. Couples the redox reaction to proton translocation (for every two electrons transferred, four hydrogen ions are translocated across the cytoplasmic membrane), and thus conserves the redox energy in a proton gradient. The protein is NADH-quinone oxidoreductase subunit N of Cytophaga hutchinsonii (strain ATCC 33406 / DSM 1761 / CIP 103989 / NBRC 15051 / NCIMB 9469 / D465).